The sequence spans 747 residues: Sex-specific storage-protein 1 (747 aa).

The first 15 residues, 1–15, serve as a signal peptide directing secretion; it reads MRVLVLLACLAAASA. 2 N-linked (GlcNAc...) asparagine glycosylation sites follow: asparagine 494 and asparagine 706.

Belongs to the hemocyanin family. As to expression, fat body.

It localises to the secreted. Its subcellular location is the extracellular space. Functionally, larval storage protein (LSP) which may serve as a store of amino acids for synthesis of adult proteins. The protein is Sex-specific storage-protein 1 (SP1) of Bombyx mori (Silk moth).